Here is a 308-residue protein sequence, read N- to C-terminus: Mycothiol acetyltransferase (308 aa).

N-acetyltransferase domains follow at residues D12–G149 and V165–T308. E43 serves as a coordination point for 1D-myo-inositol 2-(L-cysteinylamino)-2-deoxy-alpha-D-glucopyranoside. L88 to V90 contributes to the acetyl-CoA binding site. 1D-myo-inositol 2-(L-cysteinylamino)-2-deoxy-alpha-D-glucopyranoside contacts are provided by E192, K231, and E240. Residues V244–V246 and Q251–R257 contribute to the acetyl-CoA site. Y278 provides a ligand contact to 1D-myo-inositol 2-(L-cysteinylamino)-2-deoxy-alpha-D-glucopyranoside.

It belongs to the acetyltransferase family. MshD subfamily. As to quaternary structure, monomer.

It carries out the reaction 1D-myo-inositol 2-(L-cysteinylamino)-2-deoxy-alpha-D-glucopyranoside + acetyl-CoA = mycothiol + CoA + H(+). Catalyzes the transfer of acetyl from acetyl-CoA to desacetylmycothiol (Cys-GlcN-Ins) to form mycothiol. This Streptomyces bingchenggensis (strain BCW-1) protein is Mycothiol acetyltransferase.